The chain runs to 125 residues: Snaclec B7 (125 aa).

3 disulfide bridges follow: Cys-2–Cys-13, Cys-30–Cys-119, and Cys-96–Cys-111. The C-type lectin domain maps to 9–120 (HEGHCYKVFK…CNISQYFVCQ (112 aa)). The N-linked (GlcNAc...) asparagine glycan is linked to Asn-112.

Belongs to the snaclec family. In terms of assembly, heterodimer; disulfide-linked. Expressed by the venom gland.

It is found in the secreted. Interferes with one step of hemostasis (modulation of platelet aggregation, or coagulation cascade, for example). This Macrovipera lebetinus (Levantine viper) protein is Snaclec B7.